We begin with the raw amino-acid sequence, 426 residues long: Protein EARLY STARVATION 1, chloroplastic (426 aa).

Residues 1-58 (MSEMAASSAISLLDIKLRRFGVGASNHELRLTKWFKGDQAGAPTRRFTCFADMLAPIR) constitute a chloroplast transit peptide. 2 disordered regions span residues 106–127 (CTPR…TGIA) and 396–426 (QPRE…DQPQ). The span at 118-127 (TPPKRDTGIA) shows a compositional bias: basic and acidic residues. A compositionally biased stretch (pro residues) spans 412-426 (PSPPPEPDLPPDQPQ).

It belongs to the ESV1 family.

It is found in the plastid. Its subcellular location is the chloroplast stroma. The protein resides in the plastid stroma. Functionally, binds preferentially to highly ordered alpha-glucans, such as starch and crystalline maltodextrins. Involved in the organization of the starch granule matrix, thus influencing starch turnover by modulating the accessibility of starch polymers to modifying and degrading enzymes involved in phosphorylation, hydrolyzes and synthesis, including starch synthases (SSI and SSIII), starch phosphorylases (PHS1), isoamylase, beta-amylase, glucan water dikinase (GWD) and phosphoglucan water dikinase (PWD). Prevents GWD- and PWD-mediated starch phosphorylation, and subsequent degradation. Required for the control of starch degradation in leaves and starch distribution in nonphotosynthetic parts (e.g. cells immediately adjacent to veins, columella cells of root caps, stems, flowers and siliques) by limiting the hasty depletion of starch reserves during the night. Promotes gravitropic responses, negative in shoots but positive in roots, by maintaining starch granules (statoliths) accumulation in hypocotyls and roots columella, especially in dark conditions and in the endodermis, where starch is formed from transported glucose-6-phosphates. This Arabidopsis thaliana (Mouse-ear cress) protein is Protein EARLY STARVATION 1, chloroplastic.